The primary structure comprises 123 residues: Integration host factor subunit alpha (123 aa).

The interval 97–123 (NANGTASSMSSSANAAAGDKSESASGT) is disordered. The segment covering 102–113 (ASSMSSSANAAA) has biased composition (low complexity).

The protein belongs to the bacterial histone-like protein family. In terms of assembly, heterodimer of an alpha and a beta chain.

Functionally, this protein is one of the two subunits of integration host factor, a specific DNA-binding protein that functions in genetic recombination as well as in transcriptional and translational control. This chain is Integration host factor subunit alpha, found in Rhodopseudomonas palustris (strain HaA2).